Reading from the N-terminus, the 924-residue chain is Isoleucine--tRNA ligase (924 aa).

The 'HIGH' region signature appears at Pro-57–His-67. Glu-552 serves as a coordination point for L-isoleucyl-5'-AMP. A 'KMSKS' region motif is present at residues Lys-593 to Ser-597. Lys-596 contributes to the ATP binding site. Cys-891, Cys-894, Cys-911, and Cys-914 together coordinate Zn(2+).

Belongs to the class-I aminoacyl-tRNA synthetase family. IleS type 1 subfamily. Monomer. It depends on Zn(2+) as a cofactor.

It is found in the cytoplasm. It catalyses the reaction tRNA(Ile) + L-isoleucine + ATP = L-isoleucyl-tRNA(Ile) + AMP + diphosphate. Catalyzes the attachment of isoleucine to tRNA(Ile). As IleRS can inadvertently accommodate and process structurally similar amino acids such as valine, to avoid such errors it has two additional distinct tRNA(Ile)-dependent editing activities. One activity is designated as 'pretransfer' editing and involves the hydrolysis of activated Val-AMP. The other activity is designated 'posttransfer' editing and involves deacylation of mischarged Val-tRNA(Ile). The protein is Isoleucine--tRNA ligase of Geobacillus kaustophilus (strain HTA426).